The primary structure comprises 282 residues: MSPVAIVACVCLAVTLTRISPSEAIFPTPELQNVFLGRCKDYEITRYLTILPRVKSDCRALWTNFFKAFSFKAPCNLDLGSYKDFFQRAQQTLPKNKVMFWSGVYDEAHDFADDGRKYITLEDTLPGYMLNSLVWCGQRDKPGFNQKVCPDFKDCPVQARESFWGTASSSYAHSAEGDVTYMVDGSNPKVPAYRPDSFFGKYELPNLTNKVTKVKVIVLHQLGQKIIERCGAGSLLDLEMVVKAKKFGFDCVENPKSVLFLLCADNPNARECQLAKRYYRIA.

The first 24 residues, 1–24, serve as a signal peptide directing secretion; sequence MSPVAIVACVCLAVTLTRISPSEA. 5 disulfide bridges follow: Cys39/Cys58, Cys75/Cys155, Cys136/Cys149, Cys230/Cys251, and Cys263/Cys272.

This sequence belongs to the ADP-ribosyl cyclase family. As to expression, ovotestis.

The protein localises to the cytoplasmic vesicle. The enzyme catalyses NAD(+) = cyclic ADP-beta-D-ribose + nicotinamide + H(+). It catalyses the reaction NAD(+) + H2O = ADP-D-ribose + nicotinamide + H(+). It carries out the reaction nicotinate + NADP(+) = nicotinate-adenine dinucleotide phosphate + nicotinamide. With respect to regulation, activity is presumably regulated by its sequestration in vesicles before egg fertilization. After fertilization and upon NADase release, it could then be regulated via its potential phosphorylation sites. Its function is as follows. Synthesizes cyclic ADP-ribose (cADPR), a second messenger for calcium mobilization from endoplasmic reticulum. Might make the Ca(2+) mobilizer nicotinate-adenine dinucleotide phosphate. Does not have cADPR hydrolase activity. The chain is ADP-ribosyl cyclase/cyclic ADP-ribose hydrolase from Aplysia kurodai (Kuroda's sea hare).